Consider the following 368-residue polypeptide: E3 ubiquitin-protein ligase makorin (368 aa).

2 C3H1-type zinc fingers span residues 2-29 (STKR…HDWN) and 30-57 (DQPN…HVKV). Positions 58 to 81 (SRNPTVAPPPSSSTTTRASSSLQP) are disordered. Low complexity predominate over residues 69 to 78 (SSTTTRASSS). The C3H1-type 3 zinc-finger motif lies at 147-174 (PADLPICSFAAGGNCPYGEECPQMHGDL). The tract at residues 175-202 (CTTCGKMCLHPYRPDEREEHTKLCEKNH) is makorin-type Cys-His. The RING-type zinc finger occupies 216–274 (CSVCLDRVLSKPTAAERKFGLLSECDHPFCISCIRNWRNNSPTSGMDVNSALRACPICR). A C3H1-type 4 zinc finger spans residues 303 to 332 (KLKSIDCKYFDFGTGTCPFGSSCFYKHAYR).

In terms of tissue distribution, expressed in primary roots and leaves. Detected in vascular bundle tissues.

The enzyme catalyses S-ubiquitinyl-[E2 ubiquitin-conjugating enzyme]-L-cysteine + [acceptor protein]-L-lysine = [E2 ubiquitin-conjugating enzyme]-L-cysteine + N(6)-ubiquitinyl-[acceptor protein]-L-lysine.. Its pathway is protein modification; protein ubiquitination. Its function is as follows. E3 ubiquitin ligase catalyzing the covalent attachment of ubiquitin moieties onto substrate proteins. The protein is E3 ubiquitin-protein ligase makorin (MKRN) of Oryza sativa subsp. japonica (Rice).